We begin with the raw amino-acid sequence, 359 residues long: UPF0283 membrane protein R01807 (359 aa).

Helical transmembrane passes span 76–96 (FGKIAAGAFGILISLAVGLWI) and 109–129 (WLGYGAVAVVAIGVIAFLIVV).

Belongs to the UPF0283 family.

It localises to the cell inner membrane. The chain is UPF0283 membrane protein R01807 from Rhizobium meliloti (strain 1021) (Ensifer meliloti).